Consider the following 348-residue polypeptide: Holliday junction branch migration complex subunit RuvB (348 aa).

The tract at residues 1–184 (MTLNRDMVSP…FGIVQRLEFY (184 aa)) is large ATPase domain (RuvB-L). L23, R24, G65, K68, T69, T70, R174, Y184, and R221 together coordinate ATP. Residue T69 coordinates Mg(2+). The tract at residues 185 to 255 (AVDHLVLIVE…VAQKALDLLD (71 aa)) is small ATPAse domain (RuvB-S). Positions 258-348 (SHGFDTMDRK…QEVSDLFPNE (91 aa)) are head domain (RuvB-H). Positions 294, 313, and 318 each coordinate DNA.

This sequence belongs to the RuvB family. In terms of assembly, homohexamer. Forms an RuvA(8)-RuvB(12)-Holliday junction (HJ) complex. HJ DNA is sandwiched between 2 RuvA tetramers; dsDNA enters through RuvA and exits via RuvB. An RuvB hexamer assembles on each DNA strand where it exits the tetramer. Each RuvB hexamer is contacted by two RuvA subunits (via domain III) on 2 adjacent RuvB subunits; this complex drives branch migration. In the full resolvosome a probable DNA-RuvA(4)-RuvB(12)-RuvC(2) complex forms which resolves the HJ.

The protein localises to the cytoplasm. It carries out the reaction ATP + H2O = ADP + phosphate + H(+). In terms of biological role, the RuvA-RuvB-RuvC complex processes Holliday junction (HJ) DNA during genetic recombination and DNA repair, while the RuvA-RuvB complex plays an important role in the rescue of blocked DNA replication forks via replication fork reversal (RFR). RuvA specifically binds to HJ cruciform DNA, conferring on it an open structure. The RuvB hexamer acts as an ATP-dependent pump, pulling dsDNA into and through the RuvAB complex. RuvB forms 2 homohexamers on either side of HJ DNA bound by 1 or 2 RuvA tetramers; 4 subunits per hexamer contact DNA at a time. Coordinated motions by a converter formed by DNA-disengaged RuvB subunits stimulates ATP hydrolysis and nucleotide exchange. Immobilization of the converter enables RuvB to convert the ATP-contained energy into a lever motion, pulling 2 nucleotides of DNA out of the RuvA tetramer per ATP hydrolyzed, thus driving DNA branch migration. The RuvB motors rotate together with the DNA substrate, which together with the progressing nucleotide cycle form the mechanistic basis for DNA recombination by continuous HJ branch migration. Branch migration allows RuvC to scan DNA until it finds its consensus sequence, where it cleaves and resolves cruciform DNA. This chain is Holliday junction branch migration complex subunit RuvB, found in Nitrosococcus oceani (strain ATCC 19707 / BCRC 17464 / JCM 30415 / NCIMB 11848 / C-107).